Reading from the N-terminus, the 612-residue chain is Dihydroxy-acid dehydratase (612 aa).

Asp-81 is a Mg(2+) binding site. Cys-122 serves as a coordination point for [2Fe-2S] cluster. Asp-123 and Lys-124 together coordinate Mg(2+). Lys-124 is subject to N6-carboxylysine. Position 195 (Cys-195) interacts with [2Fe-2S] cluster. Glu-491 is a binding site for Mg(2+). Ser-517 functions as the Proton acceptor in the catalytic mechanism.

The protein belongs to the IlvD/Edd family. Homodimer. Requires [2Fe-2S] cluster as cofactor. It depends on Mg(2+) as a cofactor.

The enzyme catalyses (2R)-2,3-dihydroxy-3-methylbutanoate = 3-methyl-2-oxobutanoate + H2O. It catalyses the reaction (2R,3R)-2,3-dihydroxy-3-methylpentanoate = (S)-3-methyl-2-oxopentanoate + H2O. The protein operates within amino-acid biosynthesis; L-isoleucine biosynthesis; L-isoleucine from 2-oxobutanoate: step 3/4. It functions in the pathway amino-acid biosynthesis; L-valine biosynthesis; L-valine from pyruvate: step 3/4. Functions in the biosynthesis of branched-chain amino acids. Catalyzes the dehydration of (2R,3R)-2,3-dihydroxy-3-methylpentanoate (2,3-dihydroxy-3-methylvalerate) into 2-oxo-3-methylpentanoate (2-oxo-3-methylvalerate) and of (2R)-2,3-dihydroxy-3-methylbutanoate (2,3-dihydroxyisovalerate) into 2-oxo-3-methylbutanoate (2-oxoisovalerate), the penultimate precursor to L-isoleucine and L-valine, respectively. The protein is Dihydroxy-acid dehydratase of Rhizobium meliloti (strain 1021) (Ensifer meliloti).